We begin with the raw amino-acid sequence, 572 residues long: DBH-like monooxygenase protein 2 homolog (572 aa).

The first 26 residues, 1 to 26 (MGTCLKGNMSVLSLVLFLLSVQQFWA), serve as a signal peptide directing secretion. 4 N-linked (GlcNAc...) asparagine glycosylation sites follow: Asn8, Asn64, Asn187, and Asn203. Over 27-552 (QEDPLLPFSE…SPPEPCVRAC (526 aa)) the chain is Extracellular. One can recognise a DOMON domain in the interval 42 to 157 (HNVQLKWGFD…LPMKLIYAYG (116 aa)). Tyr207 is a catalytic residue. 2 cysteine pairs are disulfide-bonded: Cys209–Cys256 and Cys244–Cys263. Residues His237 and His238 each coordinate Cu cation. A Cu cation-binding site is contributed by His301. A glycan (N-linked (GlcNAc...) asparagine) is linked at Asn306. 2 disulfides stabilise this stretch: Cys358/Cys472 and Cys435/Cys457. The active site involves His381. Cu cation contacts are provided by His381, His383, and Met456. N-linked (GlcNAc...) asparagine glycans are attached at residues Asn468, Asn503, Asn518, and Asn534. The helical transmembrane segment at 553 to 571 (ATKNLAFMSLFLCLAGMWA) threads the bilayer. A topological domain (cytoplasmic) is located at residue Ser572.

Belongs to the copper type II ascorbate-dependent monooxygenase family. The cofactor is Cu(2+).

The protein resides in the membrane. This Danio rerio (Zebrafish) protein is DBH-like monooxygenase protein 2 homolog (moxd2).